Here is a 119-residue protein sequence, read N- to C-terminus: Large ribosomal subunit protein eL31y (119 aa).

This sequence belongs to the eukaryotic ribosomal protein eL31 family.

The polypeptide is Large ribosomal subunit protein eL31y (RPL31B) (Arabidopsis thaliana (Mouse-ear cress)).